A 100-amino-acid chain; its full sequence is Urease subunit gamma (100 aa).

The protein belongs to the urease gamma subunit family. In terms of assembly, heterotrimer of UreA (gamma), UreB (beta) and UreC (alpha) subunits. Three heterotrimers associate to form the active enzyme.

Its subcellular location is the cytoplasm. It catalyses the reaction urea + 2 H2O + H(+) = hydrogencarbonate + 2 NH4(+). Its pathway is nitrogen metabolism; urea degradation; CO(2) and NH(3) from urea (urease route): step 1/1. This is Urease subunit gamma from Herpetosiphon aurantiacus (strain ATCC 23779 / DSM 785 / 114-95).